Here is a 120-residue protein sequence, read N- to C-terminus: UPF0231 protein YacL (120 aa).

Belongs to the UPF0231 family.

The sequence is that of UPF0231 protein YacL from Salmonella heidelberg (strain SL476).